A 146-amino-acid polypeptide reads, in one-letter code: VHWTAEEKQLITGLWGKVNVADCGAEALARLLIVYPWTQRFFASFGNLSSPTAILGNPMVRAHGKKVLTSFGEAVKNLDNIKNTFAQLSELHCDKLHVDPENFRLLGDILIIVLAAHFGKDFTPECQAALQKLVRVVAHALARKYH.

Positions 2–146 (HWTAEEKQLI…VAHALARKYH (145 aa)) constitute a Globin domain. 2 residues coordinate heme b: H63 and H92.

The protein belongs to the globin family. As to quaternary structure, heterotetramer of two alpha chains and two beta chains. Red blood cells.

Functionally, involved in oxygen transport from the lung to the various peripheral tissues. This is Hemoglobin subunit beta (HBB) from Ara ararauna (Blue-and-yellow macaw).